The sequence spans 211 residues: WW domain-containing protein WWM1 (211 aa).

In terms of domain architecture, WW spans 9–43 (PQVPSGWKAVFDDEYQTWYYVDLSTNSSQWEPPRG). Residues 32–116 (STNSSQWEPP…QRYYPQQAPM (85 aa)) are disordered. Residues Lys-50 and Lys-60 each participate in a glycyl lysine isopeptide (Lys-Gly) (interchain with G-Cter in ubiquitin) cross-link. Ser-75 is subject to Phosphoserine. Thr-78 is subject to Phosphothreonine. Residues 80-116 (QVQAGAQAQQPRYYQPQQPQYPQYPQQQRYYPQQAPM) show a composition bias toward low complexity.

As to quaternary structure, interacts with metacaspase MCA1.

It is found in the cytoplasm. It localises to the nucleus. Its subcellular location is the mitochondrion. Involved in apoptosis. May play a role in nuclear function controlling cellular proliferation coupled to mitochondrial biogenesis. Causes impaired growth when overexpressed. The protein is WW domain-containing protein WWM1 (WWM1) of Saccharomyces cerevisiae (strain ATCC 204508 / S288c) (Baker's yeast).